A 127-amino-acid chain; its full sequence is LIM domain-containing protein 2 (127 aa).

Residue Met-1 is modified to N-acetylmethionine. Positions 1 to 24 (MFQAAGAAQATPSHDAKGGGSSTV) are disordered. The LIM zinc-binding domain maps to 38-98 (ETCAACQKTV…KPHFQQLFKS (61 aa)). The Zn(2+) site is built by Cys-40, Cys-43, His-61, Cys-64, Cys-67, Cys-70, Cys-88, and His-91.

In terms of assembly, interacts with ILK.

The protein resides in the cytoplasm. The protein localises to the nucleus. In terms of biological role, acts as an activator of the protein-kinase ILK, thereby regulating cell motility. The sequence is that of LIM domain-containing protein 2 from Homo sapiens (Human).